A 1015-amino-acid polypeptide reads, in one-letter code: Collagen alpha-2(I) chain (1015 aa).

The interval 1 to 1015 (SGGFDFSFLP…FGYEGDFYRA (1015 aa)) is disordered. 4-hydroxyproline is present on residues Pro-10 and Pro-13. Gly residues predominate over residues 20-30 (KGVGLGPGPMG). Position 38 is a 4-hydroxyproline (Pro-38). Residues 43–69 (QGPAGEPGEPGQTGPAGARGPAGPPGK) are compositionally biased toward low complexity. Over residues 70-84 (AGEDGHPGKPGRPGE) the composition is skewed to basic and acidic residues. Lys-106 carries the 5-hydroxylysine; alternate modification. Residue Lys-106 is glycosylated (O-linked (Gal...) hydroxylysine; alternate). Composition is skewed to low complexity over residues 140-169 (VGAP…SAGP), 194-208 (AGPR…VSGP), and 235-250 (PGPV…RGLV). Positions 302 to 311 (GLRGGPGSRG) are enriched in gly residues. Residues 324–340 (PAGSRGASGPAGVRGPS) show a composition bias toward low complexity. 4-hydroxyproline is present on residues Pro-346 and Pro-349. Over residues 441–450 (GVQGGKGEQG) the composition is skewed to gly residues. A compositionally biased stretch (low complexity) spans 497-514 (PGESGAAGPVGPIGSRGP). Residues 534 to 545 (GTAGPGSGGLPG) show a composition bias toward gly residues. Low complexity-rich tracts occupy residues 568–612 (VGTT…PRGS) and 619–639 (VGPA…QPGA). Basic and acidic residues predominate over residues 640–649 (KGERGTKGPK). The segment covering 657 to 670 (PTGPVGAAGPSGPN) has biased composition (low complexity). The span at 674–686 (GPAGGRGDGGPPG) shows a compositional bias: gly residues. Over residues 687-697 (LTGFPGAAGRT) the composition is skewed to low complexity. Gly residues predominate over residues 734-743 (GETGAGGPPG). Low complexity-rich tracts occupy residues 751–778 (SGEP…LGLP), 786–799 (LPGV…PGPL), 846–868 (YAGN…VGPA), and 877–897 (PGPA…PSGP). Residues 901-912 (RGDKGEAGDKGP) are compositionally biased toward basic and acidic residues. A compositionally biased stretch (pro residues) spans 987–997 (PAGPPGPPGPP).

The protein belongs to the fibrillar collagen family. Trimers of one alpha 2(I) and two alpha 1(I) chains. Interacts (via C-terminus) with TMEM131 (via PapD-L domain); the interaction is direct and is involved in assembly and TRAPPIII ER-to-Golgi transport complex-dependent secretion of collagen. In terms of processing, prolines at the third position of the tripeptide repeating unit (G-X-Y) are hydroxylated in some or all of the chains. Expressed in bones.

Its subcellular location is the secreted. It localises to the extracellular space. It is found in the extracellular matrix. Functionally, type I collagen is a member of group I collagen (fibrillar forming collagen). This is Collagen alpha-2(I) chain from Doedicurus sp. (South American giant glyptodont).